A 226-amino-acid chain; its full sequence is Deoxyribose-phosphate aldolase (226 aa).

The active-site Proton donor/acceptor is Asp-84. Lys-146 serves as the catalytic Schiff-base intermediate with acetaldehyde. Lys-188 acts as the Proton donor/acceptor in catalysis.

It belongs to the DeoC/FbaB aldolase family. DeoC type 1 subfamily.

It is found in the cytoplasm. The enzyme catalyses 2-deoxy-D-ribose 5-phosphate = D-glyceraldehyde 3-phosphate + acetaldehyde. It participates in carbohydrate degradation; 2-deoxy-D-ribose 1-phosphate degradation; D-glyceraldehyde 3-phosphate and acetaldehyde from 2-deoxy-alpha-D-ribose 1-phosphate: step 2/2. Its function is as follows. Catalyzes a reversible aldol reaction between acetaldehyde and D-glyceraldehyde 3-phosphate to generate 2-deoxy-D-ribose 5-phosphate. This Pyrobaculum arsenaticum (strain DSM 13514 / JCM 11321 / PZ6) protein is Deoxyribose-phosphate aldolase.